Here is a 205-residue protein sequence, read N- to C-terminus: Small ribosomal subunit protein uS4 (205 aa).

The tract at residues 19-45 (IWGRPKSPVNRREYGPGQHGQRRKGKL) is disordered. The S4 RNA-binding domain occupies 94–157 (RRLDAVVYRA…KQLAFVLEAS (64 aa)).

Part of the 30S ribosomal subunit. Contacts protein S5. The interaction surface between S4 and S5 is involved in control of translational fidelity. In terms of processing, may be methylated on an undetermined residue.

Its function is as follows. One of the primary rRNA binding proteins, it binds directly to 16S rRNA where it nucleates assembly of the body of the 30S subunit. In terms of biological role, with S5 and S12 plays an important role in translational accuracy. The sequence is that of Small ribosomal subunit protein uS4 from Rhodopseudomonas palustris (strain ATCC BAA-98 / CGA009).